Here is a 203-residue protein sequence, read N- to C-terminus: Mitotic spindle checkpoint component mad2 (203 aa).

Residues 13-197 form the HORMA domain; sequence KGSSKLVSEF…TSMHKIDCQV (185 aa).

The protein belongs to the MAD2 family. Interacts with mad3 and slp1.

It localises to the nucleus. Functionally, feedback control that prevents cells with incompletely assembled spindles from leaving mitosis. It interacts with the anaphase promoting complex/cyclosome (APC/C) thereby inhibiting APC/C-dependent proteolysis, a step required for exit from mitosis. The chain is Mitotic spindle checkpoint component mad2 from Schizosaccharomyces pombe (strain 972 / ATCC 24843) (Fission yeast).